A 185-amino-acid chain; its full sequence is Movement protein P1 (185 aa).

Its function is as follows. Transports viral genome to neighboring plant cells directly through plasmosdesmata, without any budding. The movement protein allows efficient cell to cell propagation, by bypassing the host cell wall barrier (Potential). Likely acts as a suppressor of RNA-mediated gene silencing, also known as post-transcriptional gene silencing (PTGS), a mechanism of plant viral defense that performs sequence-specific inhibition of viral mRNAs expression. In Glycine max (Soybean), this protein is Movement protein P1.